We begin with the raw amino-acid sequence, 417 residues long: uncharacterized protein (417 aa).

Disordered regions lie at residues 44–83 and 325–346; these read FTNE…VRSR and VQSA…PPKE. Residues 54–64 are compositionally biased toward low complexity; that stretch reads SNYSTSGYDSS. The segment covering 65–76 has biased composition (polar residues); it reads AETISANSSPIN. Positions 326-339 are enriched in basic residues; the sequence is QSARKNQKKGRKNR. A helical membrane pass occupies residues 362 to 382; that stretch reads FLIIGVYVLVFIYVCTNVLTV.

It is found in the membrane. This is an uncharacterized protein from Caenorhabditis elegans.